The chain runs to 426 residues: Serine--tRNA ligase (426 aa).

Residue 231 to 233 (TAE) coordinates L-serine. 262-264 (RAE) provides a ligand contact to ATP. E285 contacts L-serine. 349-352 (EISS) provides a ligand contact to ATP. S385 contributes to the L-serine binding site.

Belongs to the class-II aminoacyl-tRNA synthetase family. Type-1 seryl-tRNA synthetase subfamily. Homodimer. The tRNA molecule binds across the dimer.

It localises to the cytoplasm. The enzyme catalyses tRNA(Ser) + L-serine + ATP = L-seryl-tRNA(Ser) + AMP + diphosphate + H(+). It carries out the reaction tRNA(Sec) + L-serine + ATP = L-seryl-tRNA(Sec) + AMP + diphosphate + H(+). It functions in the pathway aminoacyl-tRNA biosynthesis; selenocysteinyl-tRNA(Sec) biosynthesis; L-seryl-tRNA(Sec) from L-serine and tRNA(Sec): step 1/1. Functionally, catalyzes the attachment of serine to tRNA(Ser). Is also able to aminoacylate tRNA(Sec) with serine, to form the misacylated tRNA L-seryl-tRNA(Sec), which will be further converted into selenocysteinyl-tRNA(Sec). This Myxococcus xanthus (strain DK1622) protein is Serine--tRNA ligase.